The primary structure comprises 218 residues: Elongation factor Ts (218 aa).

An involved in Mg(2+) ion dislocation from EF-Tu region spans residues 82-85 (TDFV).

This sequence belongs to the EF-Ts family.

It is found in the cytoplasm. In terms of biological role, associates with the EF-Tu.GDP complex and induces the exchange of GDP to GTP. It remains bound to the aminoacyl-tRNA.EF-Tu.GTP complex up to the GTP hydrolysis stage on the ribosome. The polypeptide is Elongation factor Ts (Prochlorococcus marinus (strain MIT 9215)).